Here is a 406-residue protein sequence, read N- to C-terminus: CinA-like protein (406 aa).

Belongs to the CinA family.

This chain is CinA-like protein, found in Thermomicrobium roseum (strain ATCC 27502 / DSM 5159 / P-2).